The sequence spans 325 residues: MIFTSSCCDNLSIDEIIERAEKGDCEAQYIVGFYYNRDSAIDSPDDEKAFYWLKLAAEQGHCEAQYSLGQKYTEDKSRHKDNEQAIFWLKKAALQGHTFASNALGWTLDRGEAPNYKEAVVWYQIAAESGMSYAQNNLGWMYRNGNGVAKDYALAFFWYKQAALQGHSDAQNNLADLYEDGKGVAQNKTLAAFWYLKSAQQGNRHAQFQIAWDYNAGEGVDQDYKQAMYWYLKAAAQGSVGAYVNIGYMYKHGQGVEKDYQAAFEWFTKAAECNDATAWYNLAIMYHYGEGRPVDLRQALDLYRKVQSSGTRDVSQEIRETEDLL.

Sel1-like repeat units follow at residues 26–61 (EAQY…EQGH), 63–97 (EAQY…LQGH), 103–130 (ALGW…AESG), 132–167 (SYAQ…LQGH), 168–203 (SDAQ…QQGN), 205–239 (HAQF…AQGS), 242–275 (AYVN…ECND), and 280–305 (YNLA…LYRK).

It to E.coli YbeT.

In Escherichia coli (strain K12), this protein is Sel1-repeat-containing protein YbeQ (ybeQ).